The following is an 87-amino-acid chain: Precursor of CEP8 (87 aa).

The first 29 residues, 1 to 29, serve as a signal peptide directing secretion; it reads MAKALFFNFCISLLIIAILVSHEIIPTEA. The propeptide occupies 30 to 72; it reads RHLRTHRKSIKNSTLTVHEGAGGLRTGGGSVKTDISKEEHGVD. N-linked (GlcNAc...) asparagine glycosylation is present at asparagine 41. The tract at residues 41–87 is disordered; it reads NSTLTVHEGAGGLRTGGGSVKTDISKEEHGVDEFRPTTPGNSPGIGH. Over residues 49–59 the composition is skewed to gly residues; it reads GAGGLRTGGGS. The span at 63 to 75 shows a compositional bias: basic and acidic residues; that stretch reads DISKEEHGVDEFR. Residues proline 76, proline 79, and proline 83 each carry the hydroxyproline modification.

This sequence belongs to the C-terminally encoded plant signaling peptide (CEP) family. In terms of assembly, interacts with CEP receptors (e.g. CEPR1 and CEPR2). In terms of processing, the mature small signaling peptide is generated by proteolytic processing of the longer precursor. Expressed in lateral root primordia and in lateral roots excluding the meristem region. Also present in the aerial tissues, such as leaf petioles and the shoot apex region.

Its subcellular location is the secreted. The protein localises to the extracellular space. It is found in the apoplast. Its function is as follows. Extracellular signaling peptide that may regulate primary root growth rate and systemic nitrogen (N)-demand signaling. Mediates up-regulation of genes involved in N uptake and assimilation pathways. In Arabidopsis thaliana (Mouse-ear cress), this protein is Precursor of CEP8.